Reading from the N-terminus, the 341-residue chain is N-acetyl-gamma-glutamyl-phosphate reductase (341 aa).

Residue Cys146 is part of the active site.

It belongs to the NAGSA dehydrogenase family. Type 1 subfamily.

It is found in the cytoplasm. The catalysed reaction is N-acetyl-L-glutamate 5-semialdehyde + phosphate + NADP(+) = N-acetyl-L-glutamyl 5-phosphate + NADPH + H(+). The protein operates within amino-acid biosynthesis; L-arginine biosynthesis; N(2)-acetyl-L-ornithine from L-glutamate: step 3/4. Catalyzes the NADPH-dependent reduction of N-acetyl-5-glutamyl phosphate to yield N-acetyl-L-glutamate 5-semialdehyde. The protein is N-acetyl-gamma-glutamyl-phosphate reductase of Limosilactobacillus fermentum (strain NBRC 3956 / LMG 18251) (Lactobacillus fermentum).